Reading from the N-terminus, the 200-residue chain is MEKPEQKLLLYKLSDRLFAAIQKNLQLERRQALLVKLGIDTVLNVIPKLIITIILALLLHELVPVLVFMGSFLVLRGFAYGRHLESDLLCTILTAVTFVGVPYLIQFTDGIPELFRFILCLLLTVPIGMFSPAVTRKNPIKSQSLKRALKHKAIITSLVFSFLQFLVSNNLGTIIVVSLLLVFTLIVPLKGGKSDEAENV.

5 helical membrane passes run 49–69 (LIIT…LVFM), 88–108 (LLCT…IQFT), 114–134 (LFRF…SPAV), 148–168 (ALKH…FLVS), and 171–191 (LGTI…PLKG).

Belongs to the AgrB family.

Its subcellular location is the cell membrane. Functionally, may be involved in the proteolytic processing of a quorum sensing system signal molecule precursor. The sequence is that of Putative AgrB-like protein from Lactiplantibacillus plantarum (strain ATCC BAA-793 / NCIMB 8826 / WCFS1) (Lactobacillus plantarum).